The primary structure comprises 20 residues: Pregnancy-associated glycoprotein 61C (20 aa).

Belongs to the peptidase A1 family. Post-translationally, N-glycosylated. As to expression, expressed in chorionic epithelium (trophectoderm).

It localises to the secreted. The protein resides in the extracellular space. The sequence is that of Pregnancy-associated glycoprotein 61C from Bubalus bubalis (Domestic water buffalo).